A 512-amino-acid chain; its full sequence is Photosystem II CP47 reaction center protein (512 aa).

A run of 6 helical transmembrane segments spans residues Ala21 to Ser36, Ile101 to Trp115, Gly140 to Phe156, Ile203 to Ser218, Val237 to Val252, and Thr457 to Arg472.

The protein belongs to the PsbB/PsbC family. PsbB subfamily. PSII is composed of 1 copy each of membrane proteins PsbA, PsbB, PsbC, PsbD, PsbE, PsbF, PsbH, PsbI, PsbJ, PsbK, PsbL, PsbM, PsbT, PsbX, PsbY, PsbZ, Psb30/Ycf12, at least 3 peripheral proteins of the oxygen-evolving complex and a large number of cofactors. It forms dimeric complexes. Requires Binds multiple chlorophylls. PSII binds additional chlorophylls, carotenoids and specific lipids. as cofactor.

The protein localises to the plastid. It localises to the chloroplast thylakoid membrane. Functionally, one of the components of the core complex of photosystem II (PSII). It binds chlorophyll and helps catalyze the primary light-induced photochemical processes of PSII. PSII is a light-driven water:plastoquinone oxidoreductase, using light energy to abstract electrons from H(2)O, generating O(2) and a proton gradient subsequently used for ATP formation. This chain is Photosystem II CP47 reaction center protein, found in Physcomitrium patens (Spreading-leaved earth moss).